We begin with the raw amino-acid sequence, 518 residues long: Probable lysine--tRNA ligase, cytoplasmic (518 aa).

It belongs to the class-II aminoacyl-tRNA synthetase family. In terms of assembly, homodimer.

It localises to the cytoplasm. The catalysed reaction is tRNA(Lys) + L-lysine + ATP = L-lysyl-tRNA(Lys) + AMP + diphosphate. The chain is Probable lysine--tRNA ligase, cytoplasmic from Enterocytozoon bieneusi (strain H348) (Microsporidian parasite).